Consider the following 340-residue polypeptide: Photosystem II assembly lipoprotein Ycf48 (340 aa).

Positions methionine 1–glycine 26 are cleaved as a signal peptide. Cysteine 27 carries the N-palmitoyl cysteine lipid modification. Cysteine 27 carries S-diacylglycerol cysteine lipidation.

The protein belongs to the Ycf48 family. As to quaternary structure, part of early PSII assembly complexes which includes D1 (psbA) and PsbI; not found in mature PSII. Binds to the lumenal side of PSII complexes. Interacts with YidC.

It localises to the cellular thylakoid membrane. Functionally, a factor required for optimal assembly of photosystem II (PSII), acting in the early stages of PSII assembly. Also plays a role in replacement of photodamaged D1 (psbA). Assists YidC in synthesis of chlorophyll-binding proteins. This Picosynechococcus sp. (strain ATCC 27264 / PCC 7002 / PR-6) (Agmenellum quadruplicatum) protein is Photosystem II assembly lipoprotein Ycf48.